We begin with the raw amino-acid sequence, 480 residues long: Aspartyl/glutamyl-tRNA(Asn/Gln) amidotransferase subunit B (480 aa).

Belongs to the GatB/GatE family. GatB subfamily. Heterotrimer of A, B and C subunits.

The catalysed reaction is L-glutamyl-tRNA(Gln) + L-glutamine + ATP + H2O = L-glutaminyl-tRNA(Gln) + L-glutamate + ADP + phosphate + H(+). It catalyses the reaction L-aspartyl-tRNA(Asn) + L-glutamine + ATP + H2O = L-asparaginyl-tRNA(Asn) + L-glutamate + ADP + phosphate + 2 H(+). Allows the formation of correctly charged Asn-tRNA(Asn) or Gln-tRNA(Gln) through the transamidation of misacylated Asp-tRNA(Asn) or Glu-tRNA(Gln) in organisms which lack either or both of asparaginyl-tRNA or glutaminyl-tRNA synthetases. The reaction takes place in the presence of glutamine and ATP through an activated phospho-Asp-tRNA(Asn) or phospho-Glu-tRNA(Gln). The sequence is that of Aspartyl/glutamyl-tRNA(Asn/Gln) amidotransferase subunit B from Saccharophagus degradans (strain 2-40 / ATCC 43961 / DSM 17024).